The primary structure comprises 563 residues: Endogenous retroviral envelope protein HEMO (563 aa).

The signal sequence occupies residues 1 to 26; it reads MGSLSNYALLQLTLTAFLTILVQPQH. At 27-488 the chain is on the extracellular side; the sequence is LLAPVFRTLS…IFAKVGDWFR (462 aa). N-linked (GlcNAc...) asparagine glycans are attached at residues N122 and N192. A helical transmembrane segment spans residues 489-509; the sequence is SWGYVLLIVLFCLFIFVLIYV. The Cytoplasmic segment spans residues 510–563; sequence RVFRKSRRSLNSQPLNLALSPQQSAQLLVSETSCQVSNRAMKGLTTHQYDTSLL.

Belongs to the gamma type-C retroviral envelope protein family. Post-translationally, N-glycosylated. In terms of processing, cleaved by some metalloproteinase at 432-Gln-Arg-433 (mainly) or 433-Arg-Gln-434, leading to release the secreted form (Endogenous retroviral envelope protein HEMO, secreted form) in the extracellular medium. Expressed at high level in the placenta and stem cells (at protein level). Also expressed in the kidney but at a lower level. Endogenous retroviral envelope protein HEMO, secreted form: Present in the blood of pregnant women (at protein level).

It localises to the cell membrane. The protein localises to the secreted. Endogenous envelope proteins originate from retroviral envelope proteins, which mediate receptor recognition and membrane fusion during early infection. Endogenous envelope proteins may have kept, lost or modified their original function during evolution. This is Endogenous retroviral envelope protein HEMO from Homo sapiens (Human).